Consider the following 150-residue polypeptide: Large ribosomal subunit protein bL9 (150 aa).

This sequence belongs to the bacterial ribosomal protein bL9 family.

Binds to the 23S rRNA. The protein is Large ribosomal subunit protein bL9 of Herminiimonas arsenicoxydans.